Here is a 33-residue protein sequence, read N- to C-terminus: Photosystem II reaction center protein Psb30 (33 aa).

The helical transmembrane segment at 5 to 25 (ILAQLTALAFIVVSGPLVIAL) threads the bilayer.

It belongs to the Psb30/Ycf12 family. PSII is composed of 1 copy each of membrane proteins PsbA, PsbB, PsbC, PsbD, PsbE, PsbF, PsbH, PsbI, PsbJ, PsbK, PsbL, PsbM, PsbT, PsbX, PsbY, PsbZ, Psb30/Ycf12, peripheral proteins of the oxygen-evolving complex and a large number of cofactors. It forms dimeric complexes.

Its subcellular location is the plastid. It localises to the chloroplast thylakoid membrane. A core subunit of photosystem II (PSII), probably helps stabilize the reaction center. The chain is Photosystem II reaction center protein Psb30 from Chaetosphaeridium globosum (Charophycean green alga).